The primary structure comprises 464 residues: 3-deoxy-D-manno-octulosonic acid transferase (464 aa).

A helical; Signal-anchor membrane pass occupies residues methionine 2–isoleucine 22. Residues tyrosine 47–tyrosine 93 enclose the RPE1 insert domain. Glutamate 107 serves as the catalytic Proton acceptor. CMP-binding positions include proline 311–arginine 312, phenylalanine 352–glutamate 354, and asparagine 377–glutamate 380.

It belongs to the glycosyltransferase group 1 family.

The protein resides in the cell inner membrane. The catalysed reaction is lipid IVA (E. coli) + CMP-3-deoxy-beta-D-manno-octulosonate = alpha-Kdo-(2-&gt;6)-lipid IVA (E. coli) + CMP + H(+). Its pathway is bacterial outer membrane biogenesis; LPS core biosynthesis. In terms of biological role, involved in lipopolysaccharide (LPS) biosynthesis. Catalyzes the transfer of 3-deoxy-D-manno-octulosonate (Kdo) residue(s) from CMP-Kdo to lipid IV(A), the tetraacyldisaccharide-1,4'-bisphosphate precursor of lipid A. This Rickettsia felis (strain ATCC VR-1525 / URRWXCal2) (Rickettsia azadi) protein is 3-deoxy-D-manno-octulosonic acid transferase (waaA).